Reading from the N-terminus, the 474-residue chain is MIMNKMKNFKRRFSLSVPRTETIEESLAEFTEQFNQLHNRRNENLQLGPLGRDPPQECSTFSPTDSGEEPGQLSPGVQFQRRQNQRRFSMEDVSKRLSLPMDIRLPQEFLQKLQMESPDLPKPLSRMSRRASLSDIGFGKLETYVKLDKLGEGTYATVFKGRSKLTENLVALKEIRLEHEEGAPCTAIREVSLLKNLKHANIVTLHDLIHTDRSLTLVFEYLDSDLKQYLDHCGNLMSMHNVKIFMFQLLRGLAYCHHRKILHRDLKPQNLLINERGELKLADFGLARAKSVPTKTYSNEVVTLWYRPPDVLLGSTEYSTPIDMWGVGCIHYEMATGRPLFPGSTVKEELHLIFRLLGTPTEETWPGVTAFSEFRTYSFPCYLPQPLINHAPRLDTDGIHLLSSLLLYESKSRMSAEAALSHSYFRSLGERVHQLEDTASIFSLKEIQLQKDPGYRGLAFQQPGRGKNRRQSIF.

Ser-14, Ser-74, Ser-89, Ser-98, Ser-117, and Ser-132 each carry phosphoserine. A disordered region spans residues 44–93 (NLQLGPLGRDPPQECSTFSPTDSGEEPGQLSPGVQFQRRQNQRRFSMEDV). One can recognise a Protein kinase domain in the interval 144 to 425 (YVKLDKLGEG…AEAALSHSYF (282 aa)). Residues 150–158 (LGEGTYATV) and Lys-173 contribute to the ATP site. Asp-265 acts as the Proton acceptor in catalysis. A phosphoserine mark is found at Ser-440 and Ser-443.

The protein belongs to the protein kinase superfamily. CMGC Ser/Thr protein kinase family. CDC2/CDKX subfamily. Isoform 2 expression is limited to several subcortical nuclei of the basal gangli and the spinal cord. Isoform 1 is widely expressed.

It catalyses the reaction L-seryl-[protein] + ATP = O-phospho-L-seryl-[protein] + ADP + H(+). The catalysed reaction is L-threonyl-[protein] + ATP = O-phospho-L-threonyl-[protein] + ADP + H(+). In terms of biological role, may play a role in signal transduction cascades in terminally differentiated cells. The polypeptide is Cyclin-dependent kinase 18 (CDK18) (Homo sapiens (Human)).